The following is a 620-amino-acid chain: MAIEKLPPQLANQIAAGEVVERPASVIKELVENSLDAGATRVDIEIDKGGSKLIRIRDNGFGIPKQDLSLALSRHATSKLKSLDDLEAIMSFGFRGEALASISSVSRLTLTSRTETQAEAWQAKAEGTEMAVQILPAAHPVGTTIEAVDLFFNTPARRRFLKSDKTEFTHIDEWLKRIALVRRDIHFTLKHNGKSVRNYRPAMTEIQYLQRLGQVCGKAFAETCLHISCSHNDLTLSGYLQAPGAASGYCETQYFYVNGRLVKDRLVNHAVRQAFSEYAAGVSPGYVLMLELDPHQVDVNVHPAKHEVRFHQSRYVHDYILQALQSAMAQSSELGLEAQPEPTDESGAAFESNSTNSNVSSTSYSEPNTKPVAVNERPLTTTATSYNQGQSSYRTPLRPATHRADVELPSQSSLEAYASLLSRSSAEPASGKVVSNPHASAVSDASVKMPAVLADKYWVIVEEDSIRLLSIADVIKETARQQIQAKLAQGLVGQPLLMPVAVPVDDNWNEVIETREILLRKLGIELSIRLGQLIIKKVPPYLRDSQLAVLIPELLQWIRFEEPSDDALVHWLTTQASSRFTASAEAWLAFSTLDSSAKSALYNQSQELPWQQWMKESQSD.

Positions Ser-332–His-402 are disordered. The segment covering Ser-352–Ser-365 has biased composition (low complexity). A compositionally biased stretch (polar residues) spans Pro-378–Arg-394.

The protein belongs to the DNA mismatch repair MutL/HexB family.

Functionally, this protein is involved in the repair of mismatches in DNA. It is required for dam-dependent methyl-directed DNA mismatch repair. May act as a 'molecular matchmaker', a protein that promotes the formation of a stable complex between two or more DNA-binding proteins in an ATP-dependent manner without itself being part of a final effector complex. This chain is DNA mismatch repair protein MutL, found in Shewanella piezotolerans (strain WP3 / JCM 13877).